The following is a 177-amino-acid chain: Bifunctional protein PyrR (177 aa).

The short motif at 99-111 (VVLVDDVLFTGRT) is the PRPP-binding element.

The protein belongs to the purine/pyrimidine phosphoribosyltransferase family. PyrR subfamily.

It catalyses the reaction UMP + diphosphate = 5-phospho-alpha-D-ribose 1-diphosphate + uracil. Regulates the transcription of the pyrimidine nucleotide (pyr) operon in response to exogenous pyrimidines. Functionally, also displays a weak uracil phosphoribosyltransferase activity which is not physiologically significant. This Geobacter sulfurreducens (strain ATCC 51573 / DSM 12127 / PCA) protein is Bifunctional protein PyrR.